Reading from the N-terminus, the 87-residue chain is Small ribosomal subunit protein bS20 (87 aa).

The segment at Met-1–Ser-26 is disordered.

Belongs to the bacterial ribosomal protein bS20 family.

Its function is as follows. Binds directly to 16S ribosomal RNA. The polypeptide is Small ribosomal subunit protein bS20 (Yersinia enterocolitica serotype O:8 / biotype 1B (strain NCTC 13174 / 8081)).